The following is a 239-amino-acid chain: Ureidoacrylate amidohydrolase RutB (239 aa).

D35 functions as the Proton acceptor in the catalytic mechanism. K144 is an active-site residue. The active-site Nucleophile is the C177.

Belongs to the isochorismatase family. RutB subfamily.

The enzyme catalyses (Z)-3-ureidoacrylate + H2O + H(+) = (Z)-3-aminoacrylate + NH4(+) + CO2. The catalysed reaction is (Z)-3-ureidoacrylate + H2O = (Z)-3-aminoacrylate + carbamate + H(+). It catalyses the reaction (Z)-2-methylureidoacrylate + H2O + H(+) = (Z)-2-methylaminoacrylate + NH4(+) + CO2. Hydrolyzes ureidoacrylate to form aminoacrylate and carbamate. The carbamate hydrolyzes spontaneously, thereby releasing one of the nitrogen atoms of the pyrimidine ring as ammonia and one of its carbon atoms as CO2. The chain is Ureidoacrylate amidohydrolase RutB from Caulobacter segnis (strain ATCC 21756 / DSM 7131 / JCM 7823 / NBRC 15250 / LMG 17158 / TK0059) (Mycoplana segnis).